The following is a 720-amino-acid chain: Protein O-mannosyl-transferase 1 (720 aa).

The next 8 membrane-spanning stretches (helical) occupy residues 7–27, 67–87, 105–125, 127–147, 150–170, 178–198, 201–221, and 239–259; these read PVSV…LALF, FGHM…NFVW, LIPA…VVEL, YSHF…SLIV, RFML…LSYL, SFFK…GIGV, MGMF…WQLI, and FLAL…IHLT. 3 MIR domains span residues 291–354, 365–422, and 426–486; these read PLDV…IKDP, PKPV…VDIV, and SEKE…VEEH. Transmembrane regions (helical) follow at residues 570 to 590, 609 to 629, 633 to 653, and 670 to 690; these read IVTW…FLTY, LVLA…PFFL, TLFL…IPIV, and AFGG…HSLS.

The protein belongs to the glycosyltransferase 39 family. As to expression, widely expressed. Has particularly strong expression in testis, ovary, brain, liver and heart.

It localises to the endoplasmic reticulum membrane. It carries out the reaction a di-trans,poly-cis-dolichyl beta-D-mannosyl phosphate + L-seryl-[protein] = 3-O-(alpha-D-mannosyl)-L-seryl-[protein] + a di-trans,poly-cis-dolichyl phosphate + H(+). It catalyses the reaction a di-trans,poly-cis-dolichyl beta-D-mannosyl phosphate + L-threonyl-[protein] = 3-O-(alpha-D-mannosyl)-L-threonyl-[protein] + a di-trans,poly-cis-dolichyl phosphate + H(+). The protein operates within protein modification; protein glycosylation. Its function is as follows. Transfers mannosyl residues to the hydroxyl group of serine or threonine residues. Coexpression of both POMT1 and POMT2 is necessary for enzyme activity, expression of either POMT1 or POMT2 alone is insufficient. This is Protein O-mannosyl-transferase 1 from Danio rerio (Zebrafish).